The following is a 450-amino-acid chain: tRNA modification GTPase MnmE (450 aa).

3 residues coordinate (6S)-5-formyl-5,6,7,8-tetrahydrofolate: Arg23, Glu81, and Lys120. One can recognise a TrmE-type G domain in the interval 216-373 (GIHLVLAGKP…LLKKIATLAG (158 aa)). GTP is bound by residues 226-231 (NAGKSS), 245-251 (TPQAGTT), 270-273 (DTAG), and 337-340 (NKAD). The Mg(2+) site is built by Ser230 and Thr251. Lys450 is a binding site for (6S)-5-formyl-5,6,7,8-tetrahydrofolate.

It belongs to the TRAFAC class TrmE-Era-EngA-EngB-Septin-like GTPase superfamily. TrmE GTPase family. Homodimer. Heterotetramer of two MnmE and two MnmG subunits. The cofactor is K(+).

It localises to the cytoplasm. Exhibits a very high intrinsic GTPase hydrolysis rate. Involved in the addition of a carboxymethylaminomethyl (cmnm) group at the wobble position (U34) of certain tRNAs, forming tRNA-cmnm(5)s(2)U34. This is tRNA modification GTPase MnmE from Dichelobacter nodosus (strain VCS1703A).